Consider the following 100-residue polypeptide: Small ribosomal subunit protein uS14c (100 aa).

This sequence belongs to the universal ribosomal protein uS14 family. In terms of assembly, part of the 30S ribosomal subunit.

Its subcellular location is the plastid. It is found in the chloroplast. Its function is as follows. Binds 16S rRNA, required for the assembly of 30S particles. The sequence is that of Small ribosomal subunit protein uS14c from Nymphaea alba (White water-lily).